We begin with the raw amino-acid sequence, 202 residues long: Type II restriction enzyme MthZI (202 aa).

It catalyses the reaction Endonucleolytic cleavage of DNA to give specific double-stranded fragments with terminal 5'-phosphates.. Functionally, a P subtype restriction enzyme that recognizes the double-stranded sequence 5'-CTAG-3' and cleaves after C-1. This chain is Type II restriction enzyme MthZI, found in Methanothermobacter thermautotrophicus (Methanobacterium thermoformicicum).